A 43-amino-acid polypeptide reads, in one-letter code: MRDTAMSQRKDDHLDIVLDERTAPATVAAGRECIRFELSSDGD.

This is an uncharacterized protein from Sinorhizobium fredii (strain NBRC 101917 / NGR234).